A 412-amino-acid chain; its full sequence is Serine hydroxymethyltransferase (412 aa).

(6S)-5,6,7,8-tetrahydrofolate contacts are provided by residues leucine 117 and 121-123; that span reads GHL. At lysine 226 the chain carries N6-(pyridoxal phosphate)lysine. (6S)-5,6,7,8-tetrahydrofolate is bound by residues glutamate 242 and 350–352; that span reads SPF.

It belongs to the SHMT family. As to quaternary structure, homodimer. Pyridoxal 5'-phosphate serves as cofactor.

It localises to the cytoplasm. It carries out the reaction (6R)-5,10-methylene-5,6,7,8-tetrahydrofolate + glycine + H2O = (6S)-5,6,7,8-tetrahydrofolate + L-serine. The protein operates within one-carbon metabolism; tetrahydrofolate interconversion. It functions in the pathway amino-acid biosynthesis; glycine biosynthesis; glycine from L-serine: step 1/1. In terms of biological role, catalyzes the reversible interconversion of serine and glycine with tetrahydrofolate (THF) serving as the one-carbon carrier. Also exhibits THF-independent aldolase activity toward beta-hydroxyamino acids, producing glycine and aldehydes, via a retro-aldol mechanism. This Methanosarcina acetivorans (strain ATCC 35395 / DSM 2834 / JCM 12185 / C2A) protein is Serine hydroxymethyltransferase.